Reading from the N-terminus, the 508-residue chain is tRNA(Ile2) 2-agmatinylcytidine synthetase TiaS (508 aa).

Positions 367–427 (ITGGHVLIEL…YQLNIEKINV (61 aa)) form a DNA-binding region, OB.

This sequence belongs to the TiaS family.

It is found in the cytoplasm. It carries out the reaction cytidine(34) in tRNA(Ile2) + agmatine + ATP + H2O = 2-agmatinylcytidine(34) in tRNA(Ile2) + AMP + 2 phosphate + 2 H(+). In terms of biological role, ATP-dependent agmatine transferase that catalyzes the formation of 2-agmatinylcytidine (agm2C) at the wobble position (C34) of tRNA(Ile2), converting the codon specificity from AUG to AUA. The chain is tRNA(Ile2) 2-agmatinylcytidine synthetase TiaS from Methanococcus voltae (strain ATCC BAA-1334 / A3).